Here is a 257-residue protein sequence, read N- to C-terminus: Global transcriptional regulator CodY (257 aa).

The segment at 1–155 is GAF domain; it reads MSLLSKTREL…AATVIGMEIL (155 aa). The H-T-H motif DNA-binding region spans 203–222; it reads ASKVADGVGITRSVIVNALR.

Belongs to the CodY family.

The protein resides in the cytoplasm. Its function is as follows. DNA-binding global transcriptional regulator which is involved in the adaptive response to starvation and acts by directly or indirectly controlling the expression of numerous genes in response to nutrient availability. During rapid exponential growth, CodY is highly active and represses genes whose products allow adaptation to nutrient depletion. This Staphylococcus aureus (strain bovine RF122 / ET3-1) protein is Global transcriptional regulator CodY.